A 204-amino-acid chain; its full sequence is 3-isopropylmalate dehydratase small subunit (204 aa).

Belongs to the LeuD family. LeuD type 1 subfamily. Heterodimer of LeuC and LeuD.

It catalyses the reaction (2R,3S)-3-isopropylmalate = (2S)-2-isopropylmalate. Its pathway is amino-acid biosynthesis; L-leucine biosynthesis; L-leucine from 3-methyl-2-oxobutanoate: step 2/4. Its function is as follows. Catalyzes the isomerization between 2-isopropylmalate and 3-isopropylmalate, via the formation of 2-isopropylmaleate. The protein is 3-isopropylmalate dehydratase small subunit of Chloroflexus aggregans (strain MD-66 / DSM 9485).